We begin with the raw amino-acid sequence, 451 residues long: Uronate isomerase (451 aa).

The protein belongs to the metallo-dependent hydrolases superfamily. Uronate isomerase family.

The enzyme catalyses D-glucuronate = D-fructuronate. The catalysed reaction is aldehydo-D-galacturonate = keto-D-tagaturonate. It participates in carbohydrate metabolism; pentose and glucuronate interconversion. This is Uronate isomerase from Thermotoga neapolitana (strain ATCC 49049 / DSM 4359 / NBRC 107923 / NS-E).